The chain runs to 352 residues: Peptide chain release factor 1 (352 aa).

Residue Gln-229 is modified to N5-methylglutamine.

This sequence belongs to the prokaryotic/mitochondrial release factor family. Post-translationally, methylated by PrmC. Methylation increases the termination efficiency of RF1.

It localises to the cytoplasm. Functionally, peptide chain release factor 1 directs the termination of translation in response to the peptide chain termination codons UAG and UAA. This chain is Peptide chain release factor 1, found in Gluconacetobacter diazotrophicus (strain ATCC 49037 / DSM 5601 / CCUG 37298 / CIP 103539 / LMG 7603 / PAl5).